Consider the following 307-residue polypeptide: Putative transcription factor bHLH086 (307 aa).

Disordered stretches follow at residues 1–49 and 167–215; these read MSLI…DHQN and HEST…QSLA. 2 stretches are compositionally biased toward polar residues: residues 12-28 and 183-197; these read NYISTPNSSEDLSSPQN and GENTQLSKKPSSGTN. Residues 207–220 form a basic motif region; it reads SPKDPQSLAAKNRR. The region spanning 207–256 is the bHLH domain; that stretch reads SPKDPQSLAAKNRRERISERLKVLQELVPNGTKVDLVTMLEKAIGYVKFL. The helix-loop-helix motif stretch occupies residues 221 to 256; sequence ERISERLKVLQELVPNGTKVDLVTMLEKAIGYVKFL.

Homodimer. Forms heterodimers with RHD6. Interacts with TIFY10B/JAZ2, TIFY6A/JAZ4, TIFY5A/JAZ8, TIFY7/JAZ9 and TIFY9/JAZ10.

It localises to the nucleus. Functionally, transcription factor that is specifically required for the development of root hairs. Acts with RHD6 to positively regulate root hair development. Acts downstream of genes that regulate epidermal pattern formation, such as GL2. Acts with RHD6 as transcription factor that integrates a jasmonate (JA) signaling pathway that stimulates root hair growth. This chain is Putative transcription factor bHLH086, found in Arabidopsis thaliana (Mouse-ear cress).